The sequence spans 351 residues: Glucan endo-1,3-beta-glucosidase (351 aa).

Residues 1–32 form the signal peptide; the sequence is MALWYLFNKRSLGAAVLILVGLLMCNIQITGA. Gln33 is modified (pyrrolidone carboxylic acid). 2 N-linked (GlcNAc...) asparagine glycosylation sites follow: Asn79 and Asn99. Glu128 functions as the Proton donor in the catalytic mechanism. The N-linked (GlcNAc...) asparagine glycan is linked to Asn235. Glu268 functions as the Nucleophile in the catalytic mechanism.

It belongs to the glycosyl hydrolase 17 family. In terms of processing, glycosylated. The N-terminus is blocked.

Its subcellular location is the secreted. The protein resides in the extracellular space. It is found in the extracellular matrix. It carries out the reaction Hydrolysis of (1-&gt;3)-beta-D-glucosidic linkages in (1-&gt;3)-beta-D-glucans.. Its function is as follows. Implicated in the defense of plants against pathogens. This is Glucan endo-1,3-beta-glucosidase (SP41B) from Nicotiana tabacum (Common tobacco).